Reading from the N-terminus, the 252-residue chain is Phosphoglycolate phosphatase (252 aa).

Catalysis depends on Asp-13, which acts as the Nucleophile. Mg(2+) contacts are provided by Asp-13, Asp-15, and Asp-192.

The protein belongs to the HAD-like hydrolase superfamily. CbbY/CbbZ/Gph/YieH family. As to quaternary structure, monomer. Mg(2+) serves as cofactor. The cofactor is chloride.

The enzyme catalyses 2-phosphoglycolate + H2O = glycolate + phosphate. It participates in organic acid metabolism; glycolate biosynthesis; glycolate from 2-phosphoglycolate: step 1/1. Functionally, specifically catalyzes the dephosphorylation of 2-phosphoglycolate. Is involved in the dissimilation of the intracellular 2-phosphoglycolate formed during the DNA repair of 3'-phosphoglycolate ends, a major class of DNA lesions induced by oxidative stress. The sequence is that of Phosphoglycolate phosphatase from Salmonella paratyphi A (strain ATCC 9150 / SARB42).